Consider the following 742-residue polypeptide: Photosystem I P700 chlorophyll a apoprotein A2 2 (742 aa).

The next 8 helical transmembrane spans lie at 46–69 (IFAT…FHVA), 135–158 (LYQG…LHLQ), 175–199 (LNHH…HVAI), 273–291 (MAHH…GHMY), 334–357 (LHFQ…QHMY), 373–399 (AALY…IFWV), 421–443 (AIIS…LYVH), and 524–542 (FLVH…LICV). C566 and C575 together coordinate [4Fe-4S] cluster. A run of 2 helical transmembrane segments spans residues 583 to 604 (SFYL…YWHW) and 651 to 673 (LSVW…MFLI). Positions 662, 670, and 678 each coordinate chlorophyll a. A phylloquinone-binding site is contributed by W679. The chain crosses the membrane as a helical span at residues 715–735 (LVGLAHFTVGYILTYAAFLIA).

The protein belongs to the PsaA/PsaB family. The PsaA/B heterodimer binds the P700 chlorophyll special pair and subsequent electron acceptors. PSI consists of a core antenna complex that captures photons, and an electron transfer chain that converts photonic excitation into a charge separation. The cyanobacterial PSI reaction center is composed of one copy each of PsaA,B,C,D,E,F,I,J,K,L,M and X, and forms trimeric complexes. PSI electron transfer chain: 5 chlorophyll a, 1 chlorophyll a', 2 phylloquinones and 3 4Fe-4S clusters. PSI core antenna: 90 chlorophyll a, 22 carotenoids, 3 phospholipids and 1 galactolipid. P700 is a chlorophyll a/chlorophyll a' dimer, A0 is one or more chlorophyll a, A1 is one or both phylloquinones and FX is a shared 4Fe-4S iron-sulfur center. is required as a cofactor.

The protein resides in the cellular thylakoid membrane. The catalysed reaction is reduced [plastocyanin] + hnu + oxidized [2Fe-2S]-[ferredoxin] = oxidized [plastocyanin] + reduced [2Fe-2S]-[ferredoxin]. PsaA and PsaB bind P700, the primary electron donor of photosystem I (PSI), as well as the electron acceptors A0, A1 and FX. PSI is a plastocyanin/cytochrome c6-ferredoxin oxidoreductase, converting photonic excitation into a charge separation, which transfers an electron from the donor P700 chlorophyll pair to the spectroscopically characterized acceptors A0, A1, FX, FA and FB in turn. Oxidized P700 is reduced on the lumenal side of the thylakoid membrane by plastocyanin or cytochrome c6. In Trichormus variabilis (strain ATCC 29413 / PCC 7937) (Anabaena variabilis), this protein is Photosystem I P700 chlorophyll a apoprotein A2 2.